The following is a 172-amino-acid chain: DNA-directed RNA polymerase II subunit RPB7 (172 aa).

It belongs to the eukaryotic RPB7/RPC8 RNA polymerase subunit family. In terms of assembly, component of the RNA polymerase II (Pol II) core complex consisting of 12 subunits: a ten-subunit catalytic core composed of POLR2A/RPB1, POLR2B/RPB2, POLR2C/RPB3, POLR2I/RPB9, POLR2J/RPB11, POLR2E/RPABC1, POLR2F/RPABC2, POLR2H/RPABC3, POLR2K/RPABC4 and POLR2L/RPABC5 and a mobile stalk composed of two subunits POLR2D/RPB4 and POLR2G/RPB7, protruding from the core and functioning primarily in transcription initiation. Part of Pol II(G) complex, in which Pol II core associates with an additional subunit POLR2M; unlike conventional Pol II, Pol II(G) functions as a transcriptional repressor. Part of TBP-based Pol II pre-initiation complex (PIC), in which Pol II core assembles with general transcription factors and other specific initiation factors including GTF2E1, GTF2E2, GTF2F1, GTF2F2, TCEA1, ERCC2, ERCC3, GTF2H2, GTF2H3, GTF2H4, GTF2H5, GTF2A1, GTF2A2, GTF2B and TBP; this large multi-subunit PIC complex mediates DNA unwinding and targets Pol II core to the transcription start site where the first phosphodiester bond forms.

The protein resides in the nucleus. Its function is as follows. Core component of RNA polymerase II (Pol II), a DNA-dependent RNA polymerase which synthesizes mRNA precursors and many functional non-coding RNAs using the four ribonucleoside triphosphates as substrates. Pol II is the central component of the basal RNA polymerase II transcription machinery. It is composed of mobile elements that move relative to each other. POLR2G/RPB7 is part of a subcomplex with POLR2D/RPB4 that binds to a pocket formed by POLR2A/RPB1, POLR2B/RPB2 and POLR2F/RPABC2 at the base of the clamp element. The POLR2D/RPB4-POLR2G/RPB7 subcomplex seems to lock the clamp via POLR2G/RPB7 in the closed conformation thus preventing double-stranded DNA to enter the active site cleft. The POLR2D/RPB4-POLR2G/RPB7 subcomplex binds single-stranded DNA and RNA. This chain is DNA-directed RNA polymerase II subunit RPB7 (POLR2G), found in Bos taurus (Bovine).